Consider the following 263-residue polypeptide: 4-hydroxy-tetrahydrodipicolinate reductase (263 aa).

Residues 8 to 13 (GACGRM), Asp-34, 99 to 101 (GTT), and 125 to 128 (SPNY) each bind NAD(+). The active-site Proton donor/acceptor is His-157. His-158 contributes to the (S)-2,3,4,5-tetrahydrodipicolinate binding site. Lys-161 acts as the Proton donor in catalysis. 167–168 (GT) lines the (S)-2,3,4,5-tetrahydrodipicolinate pocket.

This sequence belongs to the DapB family.

The protein resides in the cytoplasm. The catalysed reaction is (S)-2,3,4,5-tetrahydrodipicolinate + NAD(+) + H2O = (2S,4S)-4-hydroxy-2,3,4,5-tetrahydrodipicolinate + NADH + H(+). It carries out the reaction (S)-2,3,4,5-tetrahydrodipicolinate + NADP(+) + H2O = (2S,4S)-4-hydroxy-2,3,4,5-tetrahydrodipicolinate + NADPH + H(+). The protein operates within amino-acid biosynthesis; L-lysine biosynthesis via DAP pathway; (S)-tetrahydrodipicolinate from L-aspartate: step 4/4. Its function is as follows. Catalyzes the conversion of 4-hydroxy-tetrahydrodipicolinate (HTPA) to tetrahydrodipicolinate. This is 4-hydroxy-tetrahydrodipicolinate reductase from Methanosarcina acetivorans (strain ATCC 35395 / DSM 2834 / JCM 12185 / C2A).